We begin with the raw amino-acid sequence, 142 residues long: Putative pre-16S rRNA nuclease (142 aa).

This sequence belongs to the YqgF nuclease family.

The protein resides in the cytoplasm. Functionally, could be a nuclease involved in processing of the 5'-end of pre-16S rRNA. The chain is Putative pre-16S rRNA nuclease from Lawsonia intracellularis (strain PHE/MN1-00).